A 460-amino-acid polypeptide reads, in one-letter code: MAKAPKRAFVCNECGADYPRWQGQCSACHAWNTITEVRLAASPTVARNERLSGYAGSAGVSKVQKLSDISLEELPRFSTGFKEFDRVLGGGVVPGSAILIGGNPGAGKSTLLLQTLCKLAEQMKTLYVTGEESLQQVAMRAHRLGLPTANLNMLSETSIEQICLIAEEEQPKLMVIDSIQVMHMADIQSSPGSVAQVRETAAYLTRFAKTRGVAIVMVGHVTKDGSLAGPKVLEHCIDCSVLLDGDADSRFRTLRSHKNRFGAVNELGVFAMTEQGLREVSNPSAIFLSRGDEVTSGSSVMVVWEGTRPLLVEIQALVDHSMMANPRRVAVGLEQNRLAILLAVLHRHGGLQMSDQDVFVNVVGGVKVTETSADLALLLAMVSSLRDRPLPQDLVVFGEVGLAGEIRPVPSGQERISEAAKHGFRRAIVPAANVPKKPPEGMLVFGVKKLADALSVFDDL.

Residues 11–28 form a C4-type zinc finger; that stretch reads CNECGADYPRWQGQCSAC. 102–109 contributes to the ATP binding site; sequence GNPGAGKS. The RadA KNRFG motif signature appears at 258 to 262; that stretch reads KNRFG. Positions 357–460 are lon-protease-like; the sequence is DVFVNVVGGV…ADALSVFDDL (104 aa).

Belongs to the RecA family. RadA subfamily.

In terms of biological role, DNA-dependent ATPase involved in processing of recombination intermediates, plays a role in repairing DNA breaks. Stimulates the branch migration of RecA-mediated strand transfer reactions, allowing the 3' invading strand to extend heteroduplex DNA faster. Binds ssDNA in the presence of ADP but not other nucleotides, has ATPase activity that is stimulated by ssDNA and various branched DNA structures, but inhibited by SSB. Does not have RecA's homology-searching function. The chain is DNA repair protein RadA from Salmonella typhimurium (strain LT2 / SGSC1412 / ATCC 700720).